Reading from the N-terminus, the 156-residue chain is Rhodanese-like domain-containing protein 17 (156 aa).

Residues 44-146 form the Rhodanese domain; it reads LDSGYTFLDV…WVNKRFPVKV (103 aa). The active-site Cysteine persulfide intermediate is Cys-106.

This chain is Rhodanese-like domain-containing protein 17 (STR17), found in Arabidopsis thaliana (Mouse-ear cress).